Reading from the N-terminus, the 495-residue chain is ATP synthase subunit beta, chloroplastic (495 aa).

172–179 (GGAGVGKT) serves as a coordination point for ATP.

This sequence belongs to the ATPase alpha/beta chains family. As to quaternary structure, F-type ATPases have 2 components, CF(1) - the catalytic core - and CF(0) - the membrane proton channel. CF(1) has five subunits: alpha(3), beta(3), gamma(1), delta(1), epsilon(1). CF(0) has four main subunits: a(1), b(1), b'(1) and c(9-12).

The protein resides in the plastid. It localises to the chloroplast thylakoid membrane. The enzyme catalyses ATP + H2O + 4 H(+)(in) = ADP + phosphate + 5 H(+)(out). Produces ATP from ADP in the presence of a proton gradient across the membrane. The catalytic sites are hosted primarily by the beta subunits. The protein is ATP synthase subunit beta, chloroplastic of Scilla messeniaca (Greek squill).